Reading from the N-terminus, the 306-residue chain is uncharacterized protein (306 aa).

The segment at Asp-287 to Ser-306 is disordered.

It belongs to the aldo/keto reductase family.

Its subcellular location is the cytoplasm. The protein localises to the nucleus. This is an uncharacterized protein from Schizosaccharomyces pombe (strain 972 / ATCC 24843) (Fission yeast).